A 98-amino-acid polypeptide reads, in one-letter code: NADH-ubiquinone oxidoreductase chain 4L (98 aa).

The next 3 membrane-spanning stretches (helical) occupy residues 1 to 21 (MPSI…GMLV), 29 to 49 (SLLC…LTAL), and 61 to 81 (IILL…LVMV).

It belongs to the complex I subunit 4L family. As to quaternary structure, core subunit of respiratory chain NADH dehydrogenase (Complex I) which is composed of 45 different subunits.

It is found in the mitochondrion inner membrane. The enzyme catalyses a ubiquinone + NADH + 5 H(+)(in) = a ubiquinol + NAD(+) + 4 H(+)(out). Functionally, core subunit of the mitochondrial membrane respiratory chain NADH dehydrogenase (Complex I) which catalyzes electron transfer from NADH through the respiratory chain, using ubiquinone as an electron acceptor. Part of the enzyme membrane arm which is embedded in the lipid bilayer and involved in proton translocation. The protein is NADH-ubiquinone oxidoreductase chain 4L (MT-ND4L) of Oryctolagus cuniculus (Rabbit).